The sequence spans 332 residues: Glycerol-3-phosphate dehydrogenase [NAD(P)+] (332 aa).

NADPH contacts are provided by Trp13, Lys34, and Lys108. Sn-glycerol 3-phosphate contacts are provided by Lys108, Gly136, and Ser138. Ala140 is an NADPH binding site. Positions 191, 244, 254, 255, and 256 each coordinate sn-glycerol 3-phosphate. The active-site Proton acceptor is Lys191. An NADPH-binding site is contributed by Arg255. Residues Val279 and Glu281 each coordinate NADPH.

This sequence belongs to the NAD-dependent glycerol-3-phosphate dehydrogenase family.

The protein resides in the cytoplasm. The catalysed reaction is sn-glycerol 3-phosphate + NAD(+) = dihydroxyacetone phosphate + NADH + H(+). It catalyses the reaction sn-glycerol 3-phosphate + NADP(+) = dihydroxyacetone phosphate + NADPH + H(+). The protein operates within membrane lipid metabolism; glycerophospholipid metabolism. Catalyzes the reduction of the glycolytic intermediate dihydroxyacetone phosphate (DHAP) to sn-glycerol 3-phosphate (G3P), the key precursor for phospholipid synthesis. The protein is Glycerol-3-phosphate dehydrogenase [NAD(P)+] of Francisella tularensis subsp. tularensis (strain FSC 198).